Consider the following 358-residue polypeptide: Peptide chain release factor 1 (358 aa).

Position 233 is an N5-methylglutamine (glutamine 233).

Belongs to the prokaryotic/mitochondrial release factor family. In terms of processing, methylated by PrmC. Methylation increases the termination efficiency of RF1.

Its subcellular location is the cytoplasm. In terms of biological role, peptide chain release factor 1 directs the termination of translation in response to the peptide chain termination codons UAG and UAA. The chain is Peptide chain release factor 1 from Clostridium botulinum (strain 657 / Type Ba4).